A 453-amino-acid chain; its full sequence is Protein amnionless (453 aa).

A signal peptide spans 1-19 (MGVLGRVLLWLQLCALTQA). Over 20–357 (VSKLWVPNTD…ESGAHVWGSS (338 aa)) the chain is Extracellular. Asn35 is a glycosylation site (N-linked (GlcNAc...) asparagine). 6 disulfide bridges follow: Cys43–Cys96, Cys137–Cys213, Cys205–Cys211, Cys223–Cys249, Cys234–Cys250, and Cys239–Cys253. An interaction with CUBN region spans residues 67–87 (SDMLLPLDGELVLASGAGFGV). The VWFC domain occupies 202–254 (PEDCADPSGCVCGNAEAQPWICAALLQPLGGRCPQAACHSALRPQGQCCDLCG). Residues 358–378 (AAGLAGGVAAAVLLALLVLLV) traverse the membrane as a helical segment. The Cytoplasmic segment spans residues 379-453 (APPLLRRAGR…PLFAGAEAEA (75 aa)).

Interacts (via extracellular region) with CUBN/cubilin, giving rise to a huge complex containing one AMN chain and three CUBN chains. In terms of processing, N-glycosylated. Post-translationally, a soluble form arises by proteolytic removal of the membrane anchor. Detected in proximal tubules in the kidney cortex (at protein level). Long isoforms are highly expressed in small intestine, colon and kidney (renal proximal tubule epithelial cells). Shorter isoforms are detected at lower levels in testis, thymus and peripheral blood leukocytes.

The protein localises to the apical cell membrane. The protein resides in the cell membrane. Its subcellular location is the endosome membrane. It localises to the membrane. It is found in the coated pit. The protein localises to the secreted. In terms of biological role, membrane-bound component of the endocytic receptor formed by AMN and CUBN. Required for normal CUBN glycosylation and trafficking to the cell surface. The complex formed by AMN and CUBN is required for efficient absorption of vitamin B12. Required for normal CUBN-mediated protein transport in the kidney. The protein is Protein amnionless (AMN) of Homo sapiens (Human).